A 592-amino-acid polypeptide reads, in one-letter code: Elongation factor 1 alpha-like protein (592 aa).

Disordered stretches follow at residues 1–35 (MSRHRDVKNLDLDDYELDEEPGEEELTEEQEEEFR) and 78–159 (SSKA…KQNP). Over residues 12 to 32 (LDDYELDEEPGEEELTEEQEE) the composition is skewed to acidic residues. A compositionally biased stretch (basic and acidic residues) spans 82-111 (GAKEKQNTDSQKEKKQNKSKEALADAKDPL). Residues 113-124 (ESSNGIKNLSLN) show a composition bias toward polar residues. Residues 137 to 151 (VKMKNSSESDNQPEK) are compositionally biased toward basic and acidic residues. One can recognise a tr-type G domain in the interval 175–401 (KPVVHLVVTG…DQLVPPEKPY (227 aa)). Positions 184–191 (GHVDSGKS) are G1. A GTP-binding site is contributed by 184 to 191 (GHVDSGKS). Residues 240 to 244 (GVTMD) form a G2 region. The segment at 261 to 264 (DAPG) is G3. GTP is bound by residues 323 to 326 (NKLD) and 352 to 355 (FKTS). The tract at residues 323 to 326 (NKLD) is G4. The segment at 363–365 (SAI) is G5.

The protein belongs to the TRAFAC class translation factor GTPase superfamily. Classic translation factor GTPase family. As to quaternary structure, component of the Dom34-Hbs1 complex, also named Pelota-HBS1L complex, composed of dom34 and hbs1.

It localises to the cytoplasm. The enzyme catalyses GTP + H2O = GDP + phosphate + H(+). In terms of biological role, GTPase component of the Dom34-Hbs1 complex, a complex that recognizes stalled ribosomes and triggers the No-Go Decay (NGD) pathway. The Dom34-Hbs1 complex recognizes ribosomes stalled at the 3' end of an mRNA and engages stalled ribosomes by destabilizing mRNA in the mRNA channel. Following ribosome-binding, the Pelota-HBS1L complex promotes the disassembly of stalled ribosomes, followed by degradation of damaged mRNAs as part of the NGD pathway. The polypeptide is Elongation factor 1 alpha-like protein (Schizosaccharomyces pombe (strain 972 / ATCC 24843) (Fission yeast)).